The following is a 175-amino-acid chain: EKC/KEOPS complex subunit TPRKB (175 aa).

This sequence belongs to the CGI121/TPRKB family. As to quaternary structure, component of the EKC/KEOPS complex.

Its subcellular location is the cytoplasm. The protein localises to the cytosol. It localises to the nucleus. In terms of biological role, component of the EKC/KEOPS complex that is required for the formation of a threonylcarbamoyl group on adenosine at position 37 (t(6)A37) in tRNAs that read codons beginning with adenine. The complex is probably involved in the transfer of the threonylcarbamoyl moiety of threonylcarbamoyl-AMP (TC-AMP) to the N6 group of A37. Tprkb acts as an allosteric effector that regulates the t(6)A activity of the complex. In Danio rerio (Zebrafish), this protein is EKC/KEOPS complex subunit TPRKB.